The primary structure comprises 27 residues: Fructokinase (27 aa).

The protein belongs to the ROK (NagC/XylR) family. In terms of assembly, homodimer. The cofactor is Mg(2+).

It carries out the reaction D-fructose + ATP = D-fructose 6-phosphate + ADP + H(+). With respect to regulation, inhibition by zinc ions. The sequence is that of Fructokinase from Fusobacterium mortiferum.